A 475-amino-acid chain; its full sequence is Ribulose bisphosphate carboxylase large chain (475 aa).

The propeptide occupies 1–2; it reads MS. At Pro3 the chain carries N-acetylproline. Asn123 and Thr173 together coordinate substrate. Lys175 functions as the Proton acceptor in the catalytic mechanism. Lys177 provides a ligand contact to substrate. Mg(2+)-binding residues include Lys201, Asp203, and Glu204. At Lys201 the chain carries N6-carboxylysine. The active-site Proton acceptor is the His294. Positions 295, 327, and 379 each coordinate substrate.

This sequence belongs to the RuBisCO large chain family. Type I subfamily. As to quaternary structure, heterohexadecamer of 8 large chains and 8 small chains; disulfide-linked. The disulfide link is formed within the large subunit homodimers. The cofactor is Mg(2+). Post-translationally, the disulfide bond which can form in the large chain dimeric partners within the hexadecamer appears to be associated with oxidative stress and protein turnover.

It is found in the plastid. Its subcellular location is the chloroplast. The catalysed reaction is 2 (2R)-3-phosphoglycerate + 2 H(+) = D-ribulose 1,5-bisphosphate + CO2 + H2O. The enzyme catalyses D-ribulose 1,5-bisphosphate + O2 = 2-phosphoglycolate + (2R)-3-phosphoglycerate + 2 H(+). RuBisCO catalyzes two reactions: the carboxylation of D-ribulose 1,5-bisphosphate, the primary event in carbon dioxide fixation, as well as the oxidative fragmentation of the pentose substrate in the photorespiration process. Both reactions occur simultaneously and in competition at the same active site. This Gnetum parvifolium (Small-leaved jointfir) protein is Ribulose bisphosphate carboxylase large chain.